A 210-amino-acid chain; its full sequence is Large ribosomal subunit protein bL25 (210 aa).

The disordered stretch occupies residues 191-210 (KPAPKAAETDEDGEEAASEE). The span at 199–210 (TDEDGEEAASEE) shows a compositional bias: acidic residues.

Belongs to the bacterial ribosomal protein bL25 family. CTC subfamily. Part of the 50S ribosomal subunit; part of the 5S rRNA/L5/L18/L25 subcomplex. Contacts the 5S rRNA. Binds to the 5S rRNA independently of L5 and L18.

This is one of the proteins that binds to the 5S RNA in the ribosome where it forms part of the central protuberance. This chain is Large ribosomal subunit protein bL25, found in Alteromonas mediterranea (strain DSM 17117 / CIP 110805 / LMG 28347 / Deep ecotype).